Consider the following 384-residue polypeptide: Cell adhesion molecule CEACAM18 (384 aa).

The signal sequence occupies residues 1-30; it reads MDLSRPRWSLWRRVFLMASLLACGICQASG. Residues Asn-108, Asn-112, Asn-121, Asn-162, and Asn-270 are each glycosylated (N-linked (GlcNAc...) asparagine). The 88-residue stretch at 227 to 314 folds into the Ig-like C2-type domain; that stretch reads PDYVLLRSNP…LIMYMDVRIQ (88 aa). Cys-255 and Cys-296 are joined by a disulfide. The tract at residues 358–384 is disordered; the sequence is QPLLNQDKSGSMSVHPRPEDKTRRASR. Residues 359 to 369 are compositionally biased toward polar residues; it reads PLLNQDKSGSM. Positions 373-384 are enriched in basic and acidic residues; that stretch reads PRPEDKTRRASR.

It belongs to the immunoglobulin superfamily. CEA family.

This Homo sapiens (Human) protein is Cell adhesion molecule CEACAM18.